A 418-amino-acid polypeptide reads, in one-letter code: Probable endo-beta-1,4-glucanase celB (418 aa).

The N-terminal stretch at 1–18 is a signal peptide; that stretch reads MVRTFAVTALALLPLVAA. N46, N118, and N136 each carry an N-linked (GlcNAc...) asparagine glycan. E215 acts as the Nucleophile in catalysis. E220 acts as the Proton donor in catalysis. N234 and N291 each carry an N-linked (GlcNAc...) asparagine glycan.

Belongs to the glycosyl hydrolase 7 (cellulase C) family.

Its subcellular location is the secreted. The enzyme catalyses Endohydrolysis of (1-&gt;4)-beta-D-glucosidic linkages in cellulose, lichenin and cereal beta-D-glucans.. Its function is as follows. Has endoglucanase activity on substrates containing beta-1,4 glycosidic bonds, like in carboxymethylcellulose (CMC), hydroxyethylcellulose (HEC) and beta-glucan. Involved in the degradation of complex natural cellulosic substrates. The chain is Probable endo-beta-1,4-glucanase celB (celB) from Aspergillus clavatus (strain ATCC 1007 / CBS 513.65 / DSM 816 / NCTC 3887 / NRRL 1 / QM 1276 / 107).